Consider the following 131-residue polypeptide: Fatty acid-binding protein (131 aa).

(5Z,8Z,11Z,14Z)-eicosatetraenoate-binding positions include Arg-106 and 126–128 (RFY). Residues Arg-106 and 126 to 128 (RFY) contribute to the (9Z)-octadecenoate site.

The protein belongs to the calycin superfamily. Fatty-acid binding protein (FABP) family.

Its subcellular location is the cytoplasm. FABPs are thought to play a role in the intracellular transport of long-chain fatty acids and their acyl-CoA esters. This chain is Fatty acid-binding protein, found in Tyrophagus putrescentiae (Mold mite).